Consider the following 800-residue polypeptide: DNA topoisomerase 4 subunit A (800 aa).

The Topo IIA-type catalytic domain occupies 31 to 495; the sequence is LPDVRDGLKP…EIEEIKIDKE (465 aa). Tyr119 functions as the O-(5'-phospho-DNA)-tyrosine intermediate in the catalytic mechanism.

This sequence belongs to the type II topoisomerase GyrA/ParC subunit family. ParC type 2 subfamily. As to quaternary structure, heterotetramer composed of ParC and ParE.

The protein resides in the cell membrane. The enzyme catalyses ATP-dependent breakage, passage and rejoining of double-stranded DNA.. Topoisomerase IV is essential for chromosome segregation. It relaxes supercoiled DNA. Performs the decatenation events required during the replication of a circular DNA molecule. The sequence is that of DNA topoisomerase 4 subunit A from Staphylococcus aureus (strain N315).